A 302-amino-acid polypeptide reads, in one-letter code: 4-hydroxy-tetrahydrodipicolinate synthase (302 aa).

Thr-55 serves as a coordination point for pyruvate. Residue Tyr-144 is the Proton donor/acceptor of the active site. Lys-172 serves as the catalytic Schiff-base intermediate with substrate. Val-214 lines the pyruvate pocket.

It belongs to the DapA family. In terms of assembly, homotetramer; dimer of dimers.

The protein resides in the cytoplasm. The catalysed reaction is L-aspartate 4-semialdehyde + pyruvate = (2S,4S)-4-hydroxy-2,3,4,5-tetrahydrodipicolinate + H2O + H(+). It participates in amino-acid biosynthesis; L-lysine biosynthesis via DAP pathway; (S)-tetrahydrodipicolinate from L-aspartate: step 3/4. Functionally, catalyzes the condensation of (S)-aspartate-beta-semialdehyde [(S)-ASA] and pyruvate to 4-hydroxy-tetrahydrodipicolinate (HTPA). This is 4-hydroxy-tetrahydrodipicolinate synthase from Prochlorococcus marinus (strain MIT 9303).